Here is a 121-residue protein sequence, read N- to C-terminus: Large ribosomal subunit protein bL12 (121 aa).

The protein belongs to the bacterial ribosomal protein bL12 family. As to quaternary structure, homodimer. Part of the ribosomal stalk of the 50S ribosomal subunit. Forms a multimeric L10(L12)X complex, where L10 forms an elongated spine to which 2 to 4 L12 dimers bind in a sequential fashion. Binds GTP-bound translation factors.

Forms part of the ribosomal stalk which helps the ribosome interact with GTP-bound translation factors. Is thus essential for accurate translation. The polypeptide is Large ribosomal subunit protein bL12 (Shewanella frigidimarina (strain NCIMB 400)).